The primary structure comprises 242 residues: N-alpha-acetyltransferase 60 (242 aa).

The Cytoplasmic portion of the chain corresponds to 1–192 (MTEVVPSSAL…GGHPPWTILD (192 aa)). One can recognise an N-acetyltransferase domain in the interval 13–182 (VSLRLLCHDD…DGFTYVLYIN (170 aa)). Tyrosine 38 contributes to the substrate binding site. N6-acetyllysine; by autocatalysis is present on lysine 79. Tyrosine 97 is a catalytic residue. Position 99 (leucine 99) interacts with substrate. Position 101–103 (101–103 (LGV)) interacts with acetyl-CoA. Residues lysine 105, lysine 109, and lysine 121 each carry the N6-acetyllysine; by autocatalysis modification. 109–114 (KHGIGS) serves as a coordination point for acetyl-CoA. The active site involves histidine 138. Residues asparagine 143 and 150–153 (YENR) each bind acetyl-CoA. Residue lysine 156 is modified to N6-acetyllysine; by autocatalysis. Residues 162–173 (PYYYSIRGVLKD) are required for homodimerization. Tyrosine 165 provides a ligand contact to substrate. An intramembrane region (helical) is located at residues 193 to 236 (YIQHLGSALASLSPCSIPHRVYRQAHSLLCSFLPWSGISSKSGI). The Cytoplasmic segment spans residues 237–242 (EYSRTM).

The protein belongs to the acetyltransferase family. NAA60 subfamily. As to quaternary structure, monomer and homodimer; monomer in presence of substrate and homodimer in its absence. In terms of processing, acetylated: autoacetylation is required for optimal acetyltransferase activity.

The protein resides in the golgi apparatus membrane. It catalyses the reaction N-terminal L-methionyl-[transmembrane protein] + acetyl-CoA = N-terminal N(alpha)-acetyl-L-methionyl-[transmembrane protein] + CoA + H(+). The enzyme catalyses L-lysyl-[protein] + acetyl-CoA = N(6)-acetyl-L-lysyl-[protein] + CoA + H(+). Functionally, N-alpha-acetyltransferase that specifically mediates the acetylation of N-terminal residues of the transmembrane proteins, with a strong preference for N-termini facing the cytosol. Displays N-terminal acetyltransferase activity towards a range of N-terminal sequences including those starting with Met-Lys, Met-Val, Met-Ala and Met-Met. Required for normal chromosomal segregation during anaphase. May also show histone acetyltransferase activity; such results are however unclear in vivo and would require additional experimental evidences. The sequence is that of N-alpha-acetyltransferase 60 from Homo sapiens (Human).